We begin with the raw amino-acid sequence, 1347 residues long: MQPNQLKRPSLNHRFEPYTLKHLTICKRCEKEIIGVSNSAQICYSCKNIYHTRCCKEIETKKLELICLGPPKKIKTVWKIALIPSLFKSLFSKSKVIVNYSQQLINEKTFTLEAIKIWVDVMRVDNDRYIQITKYYDIFDEEVFNYIINMIIEKDINLPMVNIEFPVDLHSSVQQNQYINDQAVSQEQKQQQQQLQQQLILQQQQQQQLQQQQLNESYDNSTINNLNYSNDISNAFSPRSVFSALELSSNAQVMNALELSVPFNEDDNNDDSTLSASTYNRRNSNKNKNSNKNNTSSSSSAPASASSSKHSNLNESFSSSTTAAAIVNNIDNSNNSNNLAALSPRSTASTTTTTTTTTTTTSPKSNNHHHHQHHHQNSKSRKPSTIIINKKKIKSPKNKSSKRYMLTEQYKWSTQMIGLQILYRILFNEKNMIHFLNDKFMAPLAVLYPILINRLKAISLGSDNNNNNNNNNNNNNNNSNNNNNNNNEDFKLLSINCKLLISILNRMLDFETLIPLFFTNKVIESIAKVNSDRESLRGKLSKDEFEVMDRVVLLLGKYFHLEPYHSLIERRPEWIDMIINYSVEHKVGILHHEITRNEVKINVEIYDSPLCTVYSGVYNGMDVAIKEFSQDGMGFDWVSFYKEITIVSASQHPKVIKCYGAHTKNTNKPFIVTELCSRGTISNALNQIRKTTGQPPAIPLIVHMAIDAAQSLEFIHSKNIIHRDVKGNNFLVNENWEVKLIDFGVSRFVEARLGYTIVGTPNYMACELFNGQPYHQPADVFSFGVVLWEMFTQDTPYKNLTRIEQALFVQSGGRPTIPPTVPTTIANLIESCWVQTPHLRPTFTEILKVFYSLLTPPPDNEHLVPVVTRLFNSSIIQLKILKYLDTNTLLNCGLASRQLRYNLYNGISMEKKTFSNFWIKLMNFSKSKFRYELLSPSERKNDSTGSSPIIMCIQPFSPNSQSKNNNNNKNHHSDDIIDDDDDDDDDKTYPSLVIPFSASSPTLNINSENKNNNNVNEDKTSDTSSNSNNNNNNNNNNNNNNNNNNNNNNNNNNSNNNNNNNNLRQNQFLGNDLNKSQDNNQLMDGSGGRRDRSRSKSRSRSASPSNNHLHDKSLMGLLSSSQTSEIGDNNTNNNSDNEVDNNNNNNNNNNNNNNNNNNNNNNNNNNNNNNNNNNNNNNNNIDNNNNNKDNNNILSSENNNNTTVIEQQQQQQNVTNNNSNEPKNSNNEPKNSNITNNIVNPNVFTTTTTTTTTTRTTTTTVYDGTGTLNNLLFKINDGGIISSDSSNSLSDPESEEYSMPIKRSSSIRSPGPVSAISPLFKSLSPNLSPIVPNIINGYSFENTSACD.

Residues 12-67 (NHRFEPYTLKHLTICKRCEKEIIGVSNSAQICYSCKNIYHTRCCKEIETKKLELIC) form a Phorbol-ester/DAG-type zinc finger. Disordered stretches follow at residues 262–316 (PFNE…LNES), 333–402 (SNNS…KSSK), and 463–485 (DNNN…NNNN). Residues 271 to 282 (DSTLSASTYNRR) are compositionally biased toward polar residues. 3 stretches are compositionally biased toward low complexity: residues 286–316 (KNKN…LNES), 333–342 (SNNSNNLAAL), and 350–361 (TTTTTTTTTTTT). 2 stretches are compositionally biased toward basic residues: residues 366 to 382 (NNHH…KSRK) and 389 to 402 (NKKK…KSSK). Low complexity predominate over residues 464-485 (NNNNNNNNNNNNNNNSNNNNNN). The Protein kinase domain maps to 599 to 854 (VKINVEIYDS…EILKVFYSLL (256 aa)). ATP-binding positions include 605-613 (IYDSPLCTV) and Lys-626. The active-site Proton acceptor is Asp-724. Disordered stretches follow at residues 937–1241 (SERK…IVNP) and 1282–1310 (SSDS…IRSP). Residues 976 to 986 (IIDDDDDDDDD) show a composition bias toward acidic residues. Composition is skewed to low complexity over residues 1004 to 1015 (NINSENKNNNNV) and 1024 to 1062 (SSNS…NNNN). Composition is skewed to polar residues over residues 1063–1083 (LRQN…NQLM) and 1118–1127 (LSSSQTSEIG). 2 stretches are compositionally biased toward low complexity: residues 1128–1241 (DNNT…IVNP) and 1282–1291 (SSDSSNSLSD).

Belongs to the protein kinase superfamily. TKL Ser/Thr protein kinase family.

The catalysed reaction is L-seryl-[protein] + ATP = O-phospho-L-seryl-[protein] + ADP + H(+). It catalyses the reaction L-threonyl-[protein] + ATP = O-phospho-L-threonyl-[protein] + ADP + H(+). This is Probable serine/threonine-protein kinase DDB_G0288147 from Dictyostelium discoideum (Social amoeba).